The chain runs to 310 residues: Thioesterase pytI (310 aa).

2 helical membrane passes run 14-34 (SLTPLILIHAISGLALPYFAL) and 95-115 (LLGGWSMGGMLAIEMAAIFVA). The interval 168–195 (TLSDDASTTTSSDNSRASTDHGADSEVE) is disordered. Over residues 170-184 (SDDASTTTSSDNSRA) the composition is skewed to low complexity.

Belongs to the AMT4 thioesterase family.

The protein resides in the membrane. It participates in secondary metabolite biosynthesis. Its function is as follows. Thioesterase; part of the gene cluster that mediates the biosynthesis of pyranterreones, a family of antioxidative compounds. The first step of pyranonigrins biosynthesis is performed by the hybrid PKS-NRPS synthetase pytA that condenses 4 malonyl-CoA units ato the acetyl starter unit by the modular PKS of pytA. The acyl chain is then connected to an L-serine through the amide bond by the modular NRPS of pytA. A tetramic acid is formed and released from the PKS-NRPS pytA to give pyranterreone 5 with the help of the thioesterase pytI. Pyranterreone 5 could be methylated by pytC to afford pyranterreone 6. Both pyranterreones 5 and 6 are subsequently oxidized by the FAD-linked oxidoreductase pytB and the cytochrome P450 monooxygenase pytD to form the fused gamma-pyrone core, resulting in pyranterreones 7 and 11, respectively. The hydroxy group at C-8 of pyranterreones 7 and 11 are dehydrated by the aspartyl protease pytH to form a delta-7 double bond to give pyranterreones 3 and 1, 2 accordingly. The exo-methylene of pyranterreone 3 could be reduced into a pendant methyl by reductase pytE to provide pyranterreone 4, also known as cordylactam. Pyranterreone 4 can be reconverted to pyranterreone 3 through pytB-catalyzed dehydrogenation or further oxidized to pyranterreones 9 and 10. This is Thioesterase pytI from Aspergillus terreus.